The chain runs to 369 residues: uncharacterized protein (369 aa).

This is an uncharacterized protein from Archaeoglobus fulgidus (strain ATCC 49558 / DSM 4304 / JCM 9628 / NBRC 100126 / VC-16).